Consider the following 538-residue polypeptide: MLIPEPIQADFPWLSLSILFPIVGALIVPFIPDKGEGKEVRWYALIISLITFLITVAAYFKGFDPSLEGLQLYEKVSWLPDLGLTWSVGADGLSMPLILLTSFITSLAVLAAWPVSYKPKLFFFLILAMDGGQIAVFAVQDMLLFFLAWELELFPVYLFLAIWGGKKRQYAATKFIIYTAGSSLFILLAGLAMGFFQGGGVPDFGYTHLAQQNFGRGFQLLCYSGLLIAFGVKLPIVPLHTWLPDAHGEATAPVHMLLAGILLKMGGYALLRFNAQLLPDAHAQFAPLLIVLGVVNIIYAALTSFAQRNLKRKIAYSSISHMGFVLIGIGSFSSLGTSGAMLQMVSHGLIGASLFFLVGATYDRTHTLQLDEMGGIGQNMRIMFALWTACAFASLALPGMSGFISELMVFVGFVTDEVYTLPFRIVVASLAAIGVILTPIYLLSMLREIFFGKENAKLISKAKLVDAEPREIYIIACLLVPIIGIGLYPKIMTDTYISSIDGLVKRDLLAVERIRSDRATIMSNTSLSIGTIEAPLLD.

The next 14 membrane-spanning stretches (helical) occupy residues 11 to 31 (FPWL…VPFI), 43 to 63 (YALI…FKGF), 95 to 115 (MPLI…AWPV), 119 to 139 (PKLF…VFAV), 143 to 163 (LLFF…LAIW), 175 to 195 (FIIY…AMGF), 217 to 237 (GFQL…LPIV), 251 to 271 (TAPV…YALL), 285 to 305 (FAPL…LTSF), 314 to 334 (IAYS…SFSS), 340 to 360 (AMLQ…LVGA), 382 to 404 (IMFA…SGFI), 425 to 445 (IVVA…LLSM), and 472 to 492 (IYII…PKIM).

This sequence belongs to the complex I subunit 4 family.

It is found in the cellular thylakoid membrane. The catalysed reaction is a plastoquinone + NADH + (n+1) H(+)(in) = a plastoquinol + NAD(+) + n H(+)(out). It catalyses the reaction a plastoquinone + NADPH + (n+1) H(+)(in) = a plastoquinol + NADP(+) + n H(+)(out). Its function is as follows. NDH-1 shuttles electrons from NAD(P)H, via FMN and iron-sulfur (Fe-S) centers, to quinones in the respiratory chain. The immediate electron acceptor for the enzyme in this species is believed to be plastoquinone. Couples the redox reaction to proton translocation (for every two electrons transferred, four hydrogen ions are translocated across the cytoplasmic membrane), and thus conserves the redox energy in a proton gradient. The protein is NAD(P)H-quinone oxidoreductase chain 4 of Prochlorococcus marinus (strain NATL1A).